The sequence spans 396 residues: Phosphopentomutase (396 aa).

Mn(2+) contacts are provided by Asp-13, Asp-288, His-293, Asp-329, His-330, and His-341.

Belongs to the phosphopentomutase family. The cofactor is Mn(2+).

Its subcellular location is the cytoplasm. The enzyme catalyses 2-deoxy-alpha-D-ribose 1-phosphate = 2-deoxy-D-ribose 5-phosphate. It catalyses the reaction alpha-D-ribose 1-phosphate = D-ribose 5-phosphate. It participates in carbohydrate degradation; 2-deoxy-D-ribose 1-phosphate degradation; D-glyceraldehyde 3-phosphate and acetaldehyde from 2-deoxy-alpha-D-ribose 1-phosphate: step 1/2. Its function is as follows. Isomerase that catalyzes the conversion of deoxy-ribose 1-phosphate (dRib-1-P) and ribose 1-phosphate (Rib-1-P) to deoxy-ribose 5-phosphate (dRib-5-P) and ribose 5-phosphate (Rib-5-P), respectively. This is Phosphopentomutase from Clostridium perfringens (strain SM101 / Type A).